The following is a 356-amino-acid chain: Glycoprotein 42 (356 aa).

Residues methionine 1–serine 32 form the signal peptide. The Virion surface portion of the chain corresponds to valine 33–threonine 331. Residues asparagine 43 and asparagine 58 are each glycosylated (N-linked (GlcNAc...) asparagine; by host). The segment at arginine 247–glycine 279 is disordered. Positions proline 254–glycine 263 are enriched in pro residues. Asparagine 296 is a glycosylation site (N-linked (GlcNAc...) asparagine; by host). Positions cysteine 306–cysteine 309 match the CXXC motif. An N-linked (GlcNAc...) asparagine; by host glycan is attached at asparagine 328. Residues leucine 332–tryptophan 352 form a helical membrane-spanning segment. Over threonine 353–serine 356 the chain is Intravirion.

As to quaternary structure, homooligomer. Forms heterooligomers with mouse EPOR, probably via their respective transmembrane domains. BB6 deletion mutant does not interact with mouse MST1R isoform sf-Stk.

The protein resides in the host endoplasmic reticulum membrane. It localises to the host cell membrane. It is found in the virion membrane. Its function is as follows. This envelope-like membrane glycoprotein is responsible for ligand-independent activation of the erythropoietin receptor EPOR leading to the abnormally rapid proliferation of erythroid precursor cells. In the first stage of Friend disease, constitutive activation of the EPOR by gp42 causes uncontrolled, polyclonal proliferation of infected erythroblasts, leading to polycythemia (massive increase in the number of mature red cells). Host susceptibility to SSFV-induced erythroblastosis usually depends on the expression of the truncated isoform of MST1R receptor tyrosine kinase (MST1R isoform sf-Stk), but the deletion mutant BB6 apparently can overcome its absence. The chain is Glycoprotein 42 (env) from Mus musculus (Mouse).